The primary structure comprises 96 residues: Beta-defensin 20 (96 aa).

Residues 1–21 (MKLPQLLLILLFVVLADSVQP) form the signal peptide. Intrachain disulfides connect Cys24–Cys52, Cys32–Cys46, and Cys36–Cys53.

This sequence belongs to the beta-defensin family.

The protein localises to the secreted. Functionally, has antibacterial activity. The sequence is that of Beta-defensin 20 (Defb20) from Rattus norvegicus (Rat).